Here is a 592-residue protein sequence, read N- to C-terminus: Inactive heparanase-2 (592 aa).

The first 38 residues, 1–38 (MRVLCAFPEAMASSSSRPPSCLALVALFLALLLHLSLS), serve as a signal peptide directing secretion. Residues asparagine 254 and asparagine 392 are each glycosylated (N-linked (GlcNAc...) asparagine).

The protein belongs to the glycosyl hydrolase 79 family. In terms of assembly, interacts with HPSE. Interacts with SDC1 (via glycan chains).

The protein localises to the secreted. It localises to the extracellular space. The protein resides in the extracellular matrix. Functionally, binds heparin and heparan sulfate with high affinity, but lacks heparanase activity. Inhibits HPSE, possibly by competing for its substrates (in vitro). In Mus musculus (Mouse), this protein is Inactive heparanase-2 (Hpse2).